The chain runs to 82 residues: Toxin TdNa6 (82 aa).

The N-terminal stretch at 1–20 (MKGMIMLISCLMLIEVVVGG) is a signal peptide. Residues 21 to 82 (KEGYLLDRSN…KMWHLKTNKC (62 aa)) enclose the LCN-type CS-alpha/beta domain. Disulfide bonds link Cys32/Cys82, Cys36/Cys58, Cys44/Cys63, and Cys48/Cys65.

Belongs to the long (4 C-C) scorpion toxin superfamily. Sodium channel inhibitor family. Beta subfamily. In terms of tissue distribution, expressed by the venom gland.

Its subcellular location is the secreted. Beta toxins bind voltage-independently at site-4 of sodium channels (Nav) and shift the voltage of activation toward more negative potentials thereby affecting sodium channel activation and promoting spontaneous and repetitive firing. Is toxic to arthropods. The protein is Toxin TdNa6 of Tityus discrepans (Venezuelan scorpion).